Reading from the N-terminus, the 902-residue chain is DNA mismatch repair protein MutS (902 aa).

Gly647–Ser654 serves as a coordination point for ATP.

It belongs to the DNA mismatch repair MutS family.

Functionally, this protein is involved in the repair of mismatches in DNA. It is possible that it carries out the mismatch recognition step. This protein has a weak ATPase activity. In Nitrosospira multiformis (strain ATCC 25196 / NCIMB 11849 / C 71), this protein is DNA mismatch repair protein MutS.